The chain runs to 243 residues: CAVP-target protein (243 aa).

The disordered stretch occupies residues 1–22 (PKPPAEAKPAAKPAAPPAAANP). Over residues 7-20 (AKPAAKPAAPPAAA) the composition is skewed to low complexity. Residues 35–62 (SAATRIQASFRMHKNRMALKEKSIPKFS) enclose the IQ domain. 2 consecutive Ig-like C2-type domains span residues 59–150 (PKFS…LALE) and 151–243 (VPAK…VKVN).

This protein is the target of CAVP, which binds to it in a calcium-dependent manner. The sequence is that of CAVP-target protein from Branchiostoma lanceolatum (Common lancelet).